The following is a 599-amino-acid chain: Beta-(1--&gt;2)glucan export ATP-binding/permease protein NdvA (599 aa).

Residues 21–311 form the ABC transmembrane type-1 domain; the sequence is GWILAVANLL…VVNFINNVLM (291 aa). The next 6 membrane-spanning stretches (helical) occupy residues 22–42, 68–88, 146–166, 168–188, 254–274, and 276–296; these read WILA…PILF, LLGA…LVAL, EHFA…YINW, LAIL…LVVH, VITR…GIYL, and QQGL…TLLI. Residues 345 to 579 enclose the ABC transporter domain; sequence VEFQNVSFSY…GGAFAQLARA (235 aa). 378–385 provides a ligand contact to ATP; sequence GATGAGKS.

This sequence belongs to the ABC transporter superfamily. Beta-(1--&gt;2)glucan exporter (TC 3.A.1.108.1) family. Homodimer.

The protein resides in the cell inner membrane. It catalyses the reaction [(1-&gt;2)-beta-D-glucosyl](n)(in) + ATP + H2O = [(1-&gt;2)-beta-D-glucosyl](n)(out) + ADP + phosphate + H(+). Its function is as follows. Involved in beta-(1--&gt;2)glucan export. Transmembrane domains (TMD) form a pore in the inner membrane and the ATP-binding domain (NBD) is responsible for energy generation. The polypeptide is Beta-(1--&gt;2)glucan export ATP-binding/permease protein NdvA (Rhodopseudomonas palustris (strain ATCC BAA-98 / CGA009)).